Reading from the N-terminus, the 790-residue chain is Accumulates dyads protein 3 (790 aa).

Residues 8 to 122 (LNKPESLKEQ…NTLKSPNKFL (115 aa)) are disordered. Residues 39-49 (PESKPFRERRS) show a composition bias toward basic and acidic residues. Polar residues-rich tracts occupy residues 50 to 78 (QTWI…ISKL) and 89 to 108 (ESWA…TLEN). Coiled coils occupy residues 241–328 (ISKE…REEK), 361–430 (LVSE…RLND), 477–498 (KNLE…LEKN), and 540–658 (QQFR…LKKL).

As to quaternary structure, interacts directly with SSP1. Probable component of a SPB complex composed of ADY3, SSP1, DON1, MPC54, SPO21/MPC70, NUD1 and CNM67. In terms of processing, phosphorylated.

The protein localises to the prospore membrane. It localises to the cytoplasm. Its subcellular location is the cytoskeleton. It is found in the microtubule organizing center. The protein resides in the spindle pole body. Its function is as follows. Involved in the pathway that organizes the prospore membrane (PSM) during sporulation. Mediates the assembly of the DON1 ring structure at the leading edge of PSM during meiosis II. May constitute a physical link between SSP1-containing PSM precursors and the spindle pole body (SPB) and may facilitate the recruitment of other factors that are required to promote spore wall formation. The polypeptide is Accumulates dyads protein 3 (ADY3) (Saccharomyces cerevisiae (strain ATCC 204508 / S288c) (Baker's yeast)).